The primary structure comprises 311 residues: Acetyl-coenzyme A carboxylase carboxyl transferase subunit alpha (311 aa).

Residues 34-286 (EKDLQKEASK…KEYYLQNIRE (253 aa)) enclose the CoA carboxyltransferase C-terminal domain.

The protein belongs to the AccA family. As to quaternary structure, acetyl-CoA carboxylase is a heterohexamer composed of biotin carboxyl carrier protein (AccB), biotin carboxylase (AccC) and two subunits each of ACCase subunit alpha (AccA) and ACCase subunit beta (AccD).

It is found in the cytoplasm. It catalyses the reaction N(6)-carboxybiotinyl-L-lysyl-[protein] + acetyl-CoA = N(6)-biotinyl-L-lysyl-[protein] + malonyl-CoA. It functions in the pathway lipid metabolism; malonyl-CoA biosynthesis; malonyl-CoA from acetyl-CoA: step 1/1. Component of the acetyl coenzyme A carboxylase (ACC) complex. First, biotin carboxylase catalyzes the carboxylation of biotin on its carrier protein (BCCP) and then the CO(2) group is transferred by the carboxyltransferase to acetyl-CoA to form malonyl-CoA. The polypeptide is Acetyl-coenzyme A carboxylase carboxyl transferase subunit alpha (Nitratiruptor sp. (strain SB155-2)).